The primary structure comprises 98 residues: Aspartyl/glutamyl-tRNA(Asn/Gln) amidotransferase subunit C (98 aa).

The protein belongs to the GatC family. Heterotrimer of A, B and C subunits.

It carries out the reaction L-glutamyl-tRNA(Gln) + L-glutamine + ATP + H2O = L-glutaminyl-tRNA(Gln) + L-glutamate + ADP + phosphate + H(+). It catalyses the reaction L-aspartyl-tRNA(Asn) + L-glutamine + ATP + H2O = L-asparaginyl-tRNA(Asn) + L-glutamate + ADP + phosphate + 2 H(+). Allows the formation of correctly charged Asn-tRNA(Asn) or Gln-tRNA(Gln) through the transamidation of misacylated Asp-tRNA(Asn) or Glu-tRNA(Gln) in organisms which lack either or both of asparaginyl-tRNA or glutaminyl-tRNA synthetases. The reaction takes place in the presence of glutamine and ATP through an activated phospho-Asp-tRNA(Asn) or phospho-Glu-tRNA(Gln). This is Aspartyl/glutamyl-tRNA(Asn/Gln) amidotransferase subunit C from Micrococcus luteus (strain ATCC 4698 / DSM 20030 / JCM 1464 / CCM 169 / CCUG 5858 / IAM 1056 / NBRC 3333 / NCIMB 9278 / NCTC 2665 / VKM Ac-2230) (Micrococcus lysodeikticus).